The chain runs to 160 residues: Small ribosomal subunit protein uS7 (160 aa).

This sequence belongs to the universal ribosomal protein uS7 family. Part of the 30S ribosomal subunit. Contacts proteins S9 and S11.

In terms of biological role, one of the primary rRNA binding proteins, it binds directly to 16S rRNA where it nucleates assembly of the head domain of the 30S subunit. Is located at the subunit interface close to the decoding center, probably blocks exit of the E-site tRNA. In Ehrlichia canis (strain Jake), this protein is Small ribosomal subunit protein uS7.